Here is a 180-residue protein sequence, read N- to C-terminus: Flavodoxin B (180 aa).

A Flavodoxin-like domain is found at 4-173; the sequence is IGLFFGSNTG…RVAAWLAQIA (170 aa).

This sequence belongs to the flavodoxin family. It depends on FMN as a cofactor.

Its function is as follows. Low-potential electron donor to a number of redox enzymes. NifF is the electron donor to nitrogenase. This is Flavodoxin B (nifF) from Azotobacter chroococcum mcd 1.